The following is a 509-amino-acid chain: MSSHIQIFDTTLRDGEQTPGVNFTFDERLRIALQLEKWGVDVIEAGFPASSTGSFKSVQAIAQTLTTTAVCGLARCKKSDIDAVYEATKDAAKPVVHVFIATSPIHLEHKLKMSQEDVLASIKEHVTYAKQLFDVVQFSPEDATRTELPFLVKCVQTAVDAGATVINIPDTVGYSYHDEYAHIFKTLTESVTSSNEIIYSAHCHDDLGMAVSNSLAAIEGGARRIEGTVNGIGERAGNAALEEVALALYVRNDHYGAQTALNLEETKKTSDLISRYAGIRVPRNKAIVGQNAFSHESGIHQDGVLKHRETYEIMTPQLVGVSTTELPLGKLSGKHAFSEKLKALGYDIDKEAQIDLFKQFKAIADKKKSVSDRDIHAIIQGSEHEHQALYKLETLQLQYVSSGLQSAVVVVKDKEGHIYQDSSIGTGSIVAIYNAVDRIFQKETELIDYRINSVTEGTDAQAEVHVNLLIEGKTVNGFGIDHDILQASCKAYVEAHAKFAAENVEKVGN.

The region spanning 5–267 is the Pyruvate carboxyltransferase domain; the sequence is IQIFDTTLRD…QTALNLEETK (263 aa). The Mn(2+) site is built by Asp-14, His-202, His-204, and Asn-238. Residues 391 to 509 are regulatory domain; sequence KLETLQLQYV…AAENVEKVGN (119 aa).

The protein belongs to the alpha-IPM synthase/homocitrate synthase family. LeuA type 1 subfamily. In terms of assembly, homodimer. Requires Mn(2+) as cofactor.

Its subcellular location is the cytoplasm. It carries out the reaction 3-methyl-2-oxobutanoate + acetyl-CoA + H2O = (2S)-2-isopropylmalate + CoA + H(+). It participates in amino-acid biosynthesis; L-leucine biosynthesis; L-leucine from 3-methyl-2-oxobutanoate: step 1/4. Its function is as follows. Catalyzes the condensation of the acetyl group of acetyl-CoA with 3-methyl-2-oxobutanoate (2-ketoisovalerate) to form 3-carboxy-3-hydroxy-4-methylpentanoate (2-isopropylmalate). The protein is 2-isopropylmalate synthase of Staphylococcus aureus (strain USA300).